A 117-amino-acid chain; its full sequence is uncharacterized protein (117 aa).

This is an uncharacterized protein from Bacillus subtilis (strain 168).